We begin with the raw amino-acid sequence, 263 residues long: Shikimate dehydrogenase (NADP(+)) (263 aa).

Residues serine 14–serine 16 and threonine 60 contribute to the shikimate site. The Proton acceptor role is filled by lysine 64. 2 residues coordinate shikimate: asparagine 85 and aspartate 100. NADP(+) is bound by residues glycine 123–alanine 127, asparagine 146–arginine 151, and leucine 205. Tyrosine 207 is a binding site for shikimate. Glycine 228 lines the NADP(+) pocket.

It belongs to the shikimate dehydrogenase family. In terms of assembly, homodimer.

It carries out the reaction shikimate + NADP(+) = 3-dehydroshikimate + NADPH + H(+). It functions in the pathway metabolic intermediate biosynthesis; chorismate biosynthesis; chorismate from D-erythrose 4-phosphate and phosphoenolpyruvate: step 4/7. In terms of biological role, involved in the biosynthesis of the chorismate, which leads to the biosynthesis of aromatic amino acids. Catalyzes the reversible NADPH linked reduction of 3-dehydroshikimate (DHSA) to yield shikimate (SA). The sequence is that of Shikimate dehydrogenase (NADP(+)) from Thermus thermophilus (strain ATCC BAA-163 / DSM 7039 / HB27).